We begin with the raw amino-acid sequence, 496 residues long: Glycerol kinase (496 aa).

Thr12 serves as a coordination point for ADP. ATP-binding residues include Thr12, Thr13, and Ser14. Thr12 contributes to the sn-glycerol 3-phosphate binding site. Arg16 is an ADP binding site. Sn-glycerol 3-phosphate contacts are provided by Arg82, Glu83, and Tyr134. Residues Arg82, Glu83, and Tyr134 each coordinate glycerol. His230 carries the post-translational modification Phosphohistidine; by HPr. Asp244 contacts sn-glycerol 3-phosphate. The glycerol site is built by Asp244 and Gln245. ADP contacts are provided by Thr266 and Gly309. Positions 266, 309, 313, and 410 each coordinate ATP. Residues Gly410 and Asn414 each contribute to the ADP site.

The protein belongs to the FGGY kinase family. In terms of assembly, homotetramer and homodimer (in equilibrium). In terms of processing, the phosphoenolpyruvate-dependent sugar phosphotransferase system (PTS), including enzyme I, and histidine-containing protein (HPr) are required for the phosphorylation, which leads to the activation of the enzyme.

The enzyme catalyses glycerol + ATP = sn-glycerol 3-phosphate + ADP + H(+). It functions in the pathway polyol metabolism; glycerol degradation via glycerol kinase pathway; sn-glycerol 3-phosphate from glycerol: step 1/1. Activated by phosphorylation and inhibited by fructose 1,6-bisphosphate (FBP). Key enzyme in the regulation of glycerol uptake and metabolism. Catalyzes the phosphorylation of glycerol to yield sn-glycerol 3-phosphate. This chain is Glycerol kinase, found in Bacillus mycoides (strain KBAB4) (Bacillus weihenstephanensis).